The following is a 308-amino-acid chain: Porphobilinogen deaminase (308 aa).

Residue Cys-243 is modified to S-(dipyrrolylmethanemethyl)cysteine.

The protein belongs to the HMBS family. In terms of assembly, monomer. The cofactor is dipyrromethane.

It carries out the reaction 4 porphobilinogen + H2O = hydroxymethylbilane + 4 NH4(+). The protein operates within porphyrin-containing compound metabolism; protoporphyrin-IX biosynthesis; coproporphyrinogen-III from 5-aminolevulinate: step 2/4. Its function is as follows. Tetrapolymerization of the monopyrrole PBG into the hydroxymethylbilane pre-uroporphyrinogen in several discrete steps. In Nitrosomonas europaea (strain ATCC 19718 / CIP 103999 / KCTC 2705 / NBRC 14298), this protein is Porphobilinogen deaminase.